Here is a 277-residue protein sequence, read N- to C-terminus: Probable endonuclease LCL3 (277 aa).

Residues 39 to 56 traverse the membrane as a helical segment; sequence WIAPIIAAGATMGFWSFY. Residues 77-239 enclose the TNase-like domain; it reads RSLFGKVTSV…RQKGKGMWSL (163 aa). The active site involves Arg-126. Asp-131 is a Ca(2+) binding site. Residues Glu-134 and Arg-174 contribute to the active site.

Belongs to the LCL3 family.

Its subcellular location is the mitochondrion. It is found in the membrane. The chain is Probable endonuclease LCL3 (LCL3) from Podospora anserina (strain S / ATCC MYA-4624 / DSM 980 / FGSC 10383) (Pleurage anserina).